Reading from the N-terminus, the 385-residue chain is Sesquiterpene alcohol synthase (385 aa).

Mg(2+) is bound by residues D123 and D127. Residues D123–D127 carry the DDXXD motif motif.

Belongs to the terpene synthase family. It depends on Mg(2+) as a cofactor. In terms of tissue distribution, specifically expressed in tissues lining the cuticle of the abdominal sternites of mature males.

It carries out the reaction (2E,6E)-farnesyl diphosphate + H2O = (1S,6S,7R)-sesquipiperitol + diphosphate. Its pathway is pheromone biosynthesis. Sesquiterpene alcohol synthase that catalyzes the formation of (1S,6S,7R)-sesquipiperitol, a terpene intermediate in murgantiol biosynthesis, a male-released aggregation pheromone. In Murgantia histrionica (Harlequin bug), this protein is Sesquiterpene alcohol synthase.